The primary structure comprises 294 residues: Diaminopimelate epimerase (294 aa).

2 residues coordinate substrate: asparagine 11 and asparagine 78. Cysteine 87 serves as the catalytic Proton donor. Substrate is bound by residues 88–89, asparagine 167, asparagine 203, and 221–222; these read GN and ER. The Proton acceptor role is filled by cysteine 230. 231–232 contacts substrate; sequence GT.

Belongs to the diaminopimelate epimerase family. In terms of assembly, homodimer.

Its subcellular location is the cytoplasm. The catalysed reaction is (2S,6S)-2,6-diaminopimelate = meso-2,6-diaminopimelate. The protein operates within amino-acid biosynthesis; L-lysine biosynthesis via DAP pathway; DL-2,6-diaminopimelate from LL-2,6-diaminopimelate: step 1/1. Catalyzes the stereoinversion of LL-2,6-diaminopimelate (L,L-DAP) to meso-diaminopimelate (meso-DAP), a precursor of L-lysine and an essential component of the bacterial peptidoglycan. The sequence is that of Diaminopimelate epimerase from Mycolicibacterium paratuberculosis (strain ATCC BAA-968 / K-10) (Mycobacterium paratuberculosis).